We begin with the raw amino-acid sequence, 213 residues long: Protein ras-1 (213 aa).

15 to 22 (GGGGVGKS) is a GTP binding site. An Effector region motif is present at residues 37–45 (YDPTIEDSY). Residues 62–66 (DTAGQ) and 121–124 (NKYD) each bind GTP. Cysteine 210 carries the cysteine methyl ester modification. A lipid anchor (S-farnesyl cysteine) is attached at cysteine 210. Positions 211-213 (IMM) are cleaved as a propeptide — removed in mature form.

The protein belongs to the small GTPase superfamily. Ras family.

Its subcellular location is the cell membrane. It catalyses the reaction GTP + H2O = GDP + phosphate + H(+). Its function is as follows. Ras proteins bind GDP/GTP and possess intrinsic GTPase activity. This Neurospora crassa (strain ATCC 24698 / 74-OR23-1A / CBS 708.71 / DSM 1257 / FGSC 987) protein is Protein ras-1 (ras-1).